The chain runs to 189 residues: MRVGVLAIQGSVREHIEKLKLIDGVEAVLAKDKNTLLSLDALIIPGGESTAIGKMIVDFGLKDAILKLNERKIPIWGTCAGMILMAKYIVNDDKVHLGIMDISVKRNAYGSQLDSFKTKLIIPAVSNNEIEAVFIRAPYIENVGNGVRILAKHQGKIVAAQQDNLLATSFHPELTDDLSFYKYFLRLNS.

47 to 49 (GES) is an L-glutamine binding site. Cys-79 functions as the Nucleophile in the catalytic mechanism. L-glutamine-binding positions include Arg-106 and 135–136 (IR). Active-site charge relay system residues include His-171 and Glu-173.

It belongs to the glutaminase PdxT/SNO family. In terms of assembly, in the presence of PdxS, forms a dodecamer of heterodimers. Only shows activity in the heterodimer.

The enzyme catalyses aldehydo-D-ribose 5-phosphate + D-glyceraldehyde 3-phosphate + L-glutamine = pyridoxal 5'-phosphate + L-glutamate + phosphate + 3 H2O + H(+). It carries out the reaction L-glutamine + H2O = L-glutamate + NH4(+). It functions in the pathway cofactor biosynthesis; pyridoxal 5'-phosphate biosynthesis. Catalyzes the hydrolysis of glutamine to glutamate and ammonia as part of the biosynthesis of pyridoxal 5'-phosphate. The resulting ammonia molecule is channeled to the active site of PdxS. This is Pyridoxal 5'-phosphate synthase subunit PdxT from Thermoanaerobacter pseudethanolicus (strain ATCC 33223 / 39E) (Clostridium thermohydrosulfuricum).